The sequence spans 213 residues: MSSVSILDYGVGNLLSVARAFQYFDASVNLVSTPEEIMSADRLVLPGVGAFEDGMKGLTTLNFIEPIKQFARSGKPFLGICLGMQMMLSKSTEFGQHEGLGLIAGEVVSVPSHGVDGQLHKIPHIGWNELVSTSEGEDWCHTILKNIPLNSSVYFVHSFMAMPSNPKKRLADTLYDGQAISAVIKDENMYGCQFHPEKSGEVGLSIIQQFLQI.

One can recognise a Glutamine amidotransferase type-1 domain in the interval Ser-3–Ile-213. The active-site Nucleophile is Cys-81. Active-site residues include His-195 and Glu-197.

In terms of assembly, heterodimer of HisH and HisF.

The protein resides in the cytoplasm. It carries out the reaction 5-[(5-phospho-1-deoxy-D-ribulos-1-ylimino)methylamino]-1-(5-phospho-beta-D-ribosyl)imidazole-4-carboxamide + L-glutamine = D-erythro-1-(imidazol-4-yl)glycerol 3-phosphate + 5-amino-1-(5-phospho-beta-D-ribosyl)imidazole-4-carboxamide + L-glutamate + H(+). The catalysed reaction is L-glutamine + H2O = L-glutamate + NH4(+). It participates in amino-acid biosynthesis; L-histidine biosynthesis; L-histidine from 5-phospho-alpha-D-ribose 1-diphosphate: step 5/9. In terms of biological role, IGPS catalyzes the conversion of PRFAR and glutamine to IGP, AICAR and glutamate. The HisH subunit provides the glutamine amidotransferase activity that produces the ammonia necessary to HisF for the synthesis of IGP and AICAR. The polypeptide is Imidazole glycerol phosphate synthase subunit HisH 1 (Legionella pneumophila (strain Lens)).